We begin with the raw amino-acid sequence, 207 residues long: Ribosomal RNA large subunit methyltransferase E (207 aa).

G60, W62, D80, D96, and D121 together coordinate S-adenosyl-L-methionine. K161 (proton acceptor) is an active-site residue.

Belongs to the class I-like SAM-binding methyltransferase superfamily. RNA methyltransferase RlmE family.

It is found in the cytoplasm. The enzyme catalyses uridine(2552) in 23S rRNA + S-adenosyl-L-methionine = 2'-O-methyluridine(2552) in 23S rRNA + S-adenosyl-L-homocysteine + H(+). In terms of biological role, specifically methylates the uridine in position 2552 of 23S rRNA at the 2'-O position of the ribose in the fully assembled 50S ribosomal subunit. This is Ribosomal RNA large subunit methyltransferase E from Marinobacter nauticus (strain ATCC 700491 / DSM 11845 / VT8) (Marinobacter aquaeolei).